The chain runs to 354 residues: Thiamine thiazole synthase (354 aa).

Residues Ala83, 104–105 (EA), Gly112, and Val177 each bind substrate. A 2,3-didehydroalanine (Cys) modification is found at Cys210. Residues Asp212, His227, Met305, and 315-317 (RMR) contribute to the substrate site.

This sequence belongs to the THI4 family. In terms of assembly, homooctamer. Fe cation serves as cofactor. Post-translationally, during the catalytic reaction, a sulfide is transferred from Cys-210 to a reaction intermediate, generating a dehydroalanine residue.

The protein localises to the cytoplasm. The protein resides in the nucleus. It catalyses the reaction [ADP-thiazole synthase]-L-cysteine + glycine + NAD(+) = [ADP-thiazole synthase]-dehydroalanine + ADP-5-ethyl-4-methylthiazole-2-carboxylate + nicotinamide + 3 H2O + 2 H(+). Functionally, involved in biosynthesis of the thiamine precursor thiazole. Catalyzes the conversion of NAD and glycine to adenosine diphosphate 5-(2-hydroxyethyl)-4-methylthiazole-2-carboxylic acid (ADT), an adenylated thiazole intermediate. The reaction includes an iron-dependent sulfide transfer from a conserved cysteine residue of the protein to a thiazole intermediate. The enzyme can only undergo a single turnover, which suggests it is a suicide enzyme. May have additional roles in adaptation to various stress conditions and in DNA damage tolerance. In Candida albicans (strain WO-1) (Yeast), this protein is Thiamine thiazole synthase.